A 269-amino-acid chain; its full sequence is Regulating synaptic membrane exocytosis protein 4 (269 aa).

One can recognise a C2 domain in the interval 115–233; that stretch reads PMGGVEIGLQ…DLTTLAVGWY (119 aa). 2 positions are modified to phosphoserine: Ser254 and Ser257.

Binds PPFIA3. Brain specific.

Its subcellular location is the synapse. Functionally, regulates synaptic membrane exocytosis. This Rattus norvegicus (Rat) protein is Regulating synaptic membrane exocytosis protein 4 (Rims4).